Reading from the N-terminus, the 170-residue chain is MPTKTIKIMVEGGSAKPGPPLGPTLSQLGLNVQEVVKKINDVTAQFKGMSVPVTIEIDSSTKKYDIKVGVPTTTSLLLKAINAQEPSGDPAHKKIGNLDLEQIADIAIKKKPQLSAKTLTAAIKSLLGTARSIGITVEGKDPKDVIKEIDQGKYNDLLTNYEQKWNEAEG.

The protein belongs to the universal ribosomal protein uL11 family. As to quaternary structure, part of the ribosomal stalk of the 50S ribosomal subunit. Interacts with L10 and the large rRNA to form the base of the stalk. L10 forms an elongated spine to which L12 dimers bind in a sequential fashion forming a multimeric L10(L12)X complex.

Functionally, forms part of the ribosomal stalk which helps the ribosome interact with GTP-bound translation factors. In Sulfolobus acidocaldarius (strain ATCC 33909 / DSM 639 / JCM 8929 / NBRC 15157 / NCIMB 11770), this protein is Large ribosomal subunit protein uL11.